A 430-amino-acid polypeptide reads, in one-letter code: Serine--tRNA ligase (430 aa).

Position 235–237 (235–237 (TAE)) interacts with L-serine. Residues 266–268 (RRE) and valine 282 each bind ATP. Residue glutamate 289 participates in L-serine binding. 353–356 (EASS) lines the ATP pocket. Residue serine 389 coordinates L-serine.

Belongs to the class-II aminoacyl-tRNA synthetase family. Type-1 seryl-tRNA synthetase subfamily. In terms of assembly, homodimer. The tRNA molecule binds across the dimer.

Its subcellular location is the cytoplasm. It carries out the reaction tRNA(Ser) + L-serine + ATP = L-seryl-tRNA(Ser) + AMP + diphosphate + H(+). The catalysed reaction is tRNA(Sec) + L-serine + ATP = L-seryl-tRNA(Sec) + AMP + diphosphate + H(+). It participates in aminoacyl-tRNA biosynthesis; selenocysteinyl-tRNA(Sec) biosynthesis; L-seryl-tRNA(Sec) from L-serine and tRNA(Sec): step 1/1. Its function is as follows. Catalyzes the attachment of serine to tRNA(Ser). Is also able to aminoacylate tRNA(Sec) with serine, to form the misacylated tRNA L-seryl-tRNA(Sec), which will be further converted into selenocysteinyl-tRNA(Sec). The sequence is that of Serine--tRNA ligase from Chlorobium luteolum (strain DSM 273 / BCRC 81028 / 2530) (Pelodictyon luteolum).